The chain runs to 262 residues: Indole-3-glycerol phosphate synthase (262 aa).

The protein belongs to the TrpC family.

It catalyses the reaction 1-(2-carboxyphenylamino)-1-deoxy-D-ribulose 5-phosphate + H(+) = (1S,2R)-1-C-(indol-3-yl)glycerol 3-phosphate + CO2 + H2O. It participates in amino-acid biosynthesis; L-tryptophan biosynthesis; L-tryptophan from chorismate: step 4/5. This is Indole-3-glycerol phosphate synthase from Bordetella pertussis (strain Tohama I / ATCC BAA-589 / NCTC 13251).